The chain runs to 77 residues: MKNSSILLLLVVFFVISSSGEAKTCSDGWTCLGPKEEDKCKENCMAKHKGVGTCNLYTIPEFPAPITYYMCDCMFDC.

The N-terminal stretch at 1–22 (MKNSSILLLLVVFFVISSSGEA) is a signal peptide. 4 disulfide bridges follow: Cys25–Cys77, Cys31–Cys54, Cys40–Cys71, and Cys44–Cys73.

This sequence belongs to the DEFL family.

The protein resides in the secreted. This is Putative defensin-like protein 185 (LCR39) from Arabidopsis thaliana (Mouse-ear cress).